A 594-amino-acid chain; its full sequence is MADPGAVKETVLLLDEPTGEKVSKTELKKRLKSRAKEAEKQKKAATAPTKIQKETSSEQDEANLSAHQYFEIRSNRINKLRETKNSYPYPHKFEVTNDLRDFLTVYKNLAKGEERTDVPIRIAGRIYTKRVSGNKLVFYDIRAEGVKVQVMCQAQNSTTGFEEQHEVLRRGDIVGIVGFPGRTSPKTRDNGELSIFATQVVLLSPCLHALPSEHYGFQDKEQRFRQRYLDLIINDRPRQIFRTRAKIVSYLRSYLDSRDFTEVETPMMNAIAGGATASPFVTHHNDLKRDLFMRVAPELYLKMLVVGGLERVYEIGKQFRNEGIDLTHSPEFTTCEFYQAYADYNDLMAMTEDLISSMVKHITGGYETTFESQTGQVYTINWQSPWKRIDMIPALEEACGDKFPPGDQLHTPEAGTFLKEMLKKMKVECTPPLTNARMLDKLVGEFVEDKCINPTFVTGHPQMMSPLAKAHRDTPGICERFEVFVTTKELLNAYTELNDPFDQRMRFEEQANQKAQGDDEAQMVDENFCQALEYGLPPTGGWGMGIDRLTMFLTNNYSIKEVLAFPMMKDDKADGEKKEAIVKTGTAEDGSVQL.

Positions 1–62 (MADPGAVKET…KETSSEQDEA (62 aa)) are disordered. Residues 18 to 42 (TGEKVSKTELKKRLKSRAKEAEKQK) show a composition bias toward basic and acidic residues.

It belongs to the class-II aminoacyl-tRNA synthetase family. In terms of assembly, homodimer.

The enzyme catalyses tRNA(Lys) + L-lysine + ATP = L-lysyl-tRNA(Lys) + AMP + diphosphate. Its function is as follows. Involved in self-resistance to cladosporin since this product is an inhibitor of lysyl-tRNA synthetase. Cla4 may not be inhibited by cladosporin, thereby imparting cladosporin resistance. When cladosporin biosynthesis is switched on, transcription of cla4 will then be necessary for continued protein synthesis in C.cladosporioides. The protein is Lysine--tRNA ligase cla4 of Cladosporium cladosporioides.